A 508-amino-acid polypeptide reads, in one-letter code: Protein phosphatase PP2A regulatory subunit B (508 aa).

WD repeat units lie at residues 19–58, 81–122, 166–204, 215–255, 274–312, and 329–370; these read TEAD…KKQS, EIEE…IKLV, AHAY…QSFN, ELTE…LCDS, EITS…KPIK, and ENDA…GNDD. The segment at 369–466 is disordered; it reads DDKPKFKSAF…MRRRMTSGVG (98 aa). Residues 396 to 418 show a composition bias toward acidic residues; sequence DDDDDDDDDDDDEEADDEFDEEV. Residues 447 to 461 show a composition bias toward basic residues; sequence FKSKKSGQHPMRRRM. One copy of the WD 7 repeat lies at 477–507; that stretch reads DFKKSILHLSWHPRENSVAIAATNNLYIFST.

Belongs to the phosphatase 2A regulatory subunit B family. As to quaternary structure, PP2A exists in several trimeric forms, all of which consist of a core composed of a catalytic subunit associated with a 65 kDa (PR65) (Subunit A) and a 55 kDa (PR55) (Subunit B) regulatory subunit.

In terms of biological role, phosphatase 2A affects a variety of biological processes in the cell such as transcription, cell cycle progression and cellular morphogenesis, and provides an initial identification of critical substrates for this phosphatase. The regulatory subunit may direct the catalytic subunit to distinct, albeit overlapping, subsets of substrates. The sequence is that of Protein phosphatase PP2A regulatory subunit B (CDC55) from Candida tropicalis (Yeast).